Reading from the N-terminus, the 583-residue chain is Kelch-like protein 38 (583 aa).

Residues T34 to M101 enclose the BTB domain. One can recognise a BACK domain in the interval C136–A237. Kelch repeat units follow at residues T285–S332, I333–H385, F386–Q433, I435–D481, K482–N523, and L525–C575.

This chain is Kelch-like protein 38 (klhl38), found in Danio rerio (Zebrafish).